Consider the following 235-residue polypeptide: Isopentenyl-diphosphate Delta-isomerase I (235 aa).

A substrate-binding site is contributed by Lys38. Mg(2+) contacts are provided by His42 and His54. A Nudix hydrolase domain is found at 52-204 (LLHRAFSVFL…GLKLSPWFRL (153 aa)). Residues Arg73 and Lys77 each contribute to the substrate site. Cys89 is an active-site residue. Substrate is bound at residue Ser90. Mg(2+)-binding residues include Glu149 and Glu151. Residue Glu151 is part of the active site.

It belongs to the IPP isomerase type 1 family. Requires Mg(2+) as cofactor.

It carries out the reaction isopentenyl diphosphate = dimethylallyl diphosphate. It participates in isoprenoid biosynthesis; dimethylallyl diphosphate biosynthesis; dimethylallyl diphosphate from isopentenyl diphosphate: step 1/1. The protein operates within porphyrin-containing compound metabolism; chlorophyll biosynthesis. In terms of biological role, catalyzes the 1,3-allylic rearrangement of the homoallylic substrate isopentenyl (IPP) to its highly electrophilic allylic isomer, dimethylallyl diphosphate (DMAPP). In Camptotheca acuminata (Happy tree), this protein is Isopentenyl-diphosphate Delta-isomerase I (IPI1).